The following is an 862-amino-acid chain: MKTVLMVAEKPSLAQSIAKILSRGNMSSHKGLNGACSVHKYTGTFAGQPVHFKMTSVCGHVMTLDFLGKYNKWDKVDPAELFSQAPTEKKEANPKLNMVKFLQVEGRGCDYVVLWLDCDKEGENICFEVLDAVLPVMNNAHNGEKTVFRARFSSITDTDICNAMTRLSEPDHNEALSVDARQELDLRIGCAFTRFQTKYFQGKYGDLDSSLISFGPCQTPTLGFCVERHDKIQSFKPETYWVLQAKVHTDKEESLLLDWDRVRVFDWEIAQMFLNMTKLEKEAWVEATSRKEKAKQRPLALNTVEMLRVASSALGMGPQHAMQIAERLYTQGYISYPRTETTHYPENFDLKGSLRQQANHPYWADSVKQLLAEGINRPRKGHDAGDHPPITPMKSATEAELGGDAWRLYEYITRHFIATVSHDCKYLQSTISFRIGPEHFTCMGKTVISPGFTEIMPWQSVPLEESLPTCQKGDTFTVGEVKMLEKQTSPPDYLTEAELITLMEKHGIGTDASIPVHINNICQRNYVTVESGRRLKPTNLGIVLVHGYYKIDAELVLPTIRSAVEKQLNLIAQGKADYHQVLGHTLDIFKRKFHYFVDSIAGMDELMEVSFSPLAATGKPLSRCGKCHRFMKYIQAKPSRLHCSHCDETYTLPQNGTIKLYKELRCPLDDFELVLWSSGSRGKSYPLCPYCYNHPPFRDMKKGMGCNECTHPTCQHSLSMLGIGQCVECENGVLVLDPTSGPKWKVACNTCNVVAHCFENAHRVRVSADTCNTCEAALLDVDFNKAKSPLPGNETQHTGCIFCDPVFQELVELKHAASCHPMHRGGPGRRQGRGRGRGRRPPGKPNPRRPKDKMSALAAYFV.

Positions 3–153 (TVLMVAEKPS…EKTVFRARFS (151 aa)) constitute a Toprim domain. Residues 171 to 593 (DHNEALSVDA…HTLDIFKRKF (423 aa)) enclose the Topo IA-type catalytic domain. Residue Y336 is the O-(5'-phospho-DNA)-tyrosine intermediate of the active site. The segment at 820–855 (HPMHRGGPGRRQGRGRGRGRRPPGKPNPRRPKDKMS) is disordered. Over residues 821–851 (PMHRGGPGRRQGRGRGRGRRPPGKPNPRRPK) the composition is skewed to basic residues.

This sequence belongs to the type IA topoisomerase family. In terms of tissue distribution, highly expressed in testis.

The enzyme catalyses ATP-independent breakage of single-stranded DNA, followed by passage and rejoining.. Its function is as follows. Releases the supercoiling and torsional tension of DNA introduced during the DNA replication and transcription by transiently cleaving and rejoining one strand of the DNA duplex. Introduces a single-strand break via transesterification at a target site in duplex DNA. The scissile phosphodiester is attacked by the catalytic tyrosine of the enzyme, resulting in the formation of a DNA-(5'-phosphotyrosyl)-enzyme intermediate and the expulsion of a 3'-OH DNA strand. The free DNA strand than undergoes passage around the unbroken strand thus removing DNA supercoils. Finally, in the religation step, the DNA 3'-OH attacks the covalent intermediate to expel the active-site tyrosine and restore the DNA phosphodiester backbone. Possesses negatively supercoiled DNA relaxing activity. This is DNA topoisomerase 3-beta-1 (Top3b) from Mus musculus (Mouse).